The following is a 104-amino-acid chain: Thioredoxin (104 aa).

Residues 2–104 (AIVKVTDSNF…NLAEVLDKHL (103 aa)) enclose the Thioredoxin domain. A disulfide bridge links C29 with C32.

This sequence belongs to the thioredoxin family.

Functionally, component of the thioredoxin-thioredoxin reductase system. Participates in various redox reactions through the reversible oxidation of its active center dithiol to a disulfide and catalyzes dithiol-disulfide exchange reactions. This is Thioredoxin (trxA) from Staphylococcus haemolyticus (strain JCSC1435).